The primary structure comprises 245 residues: Phycoerythrobilin:ferredoxin oxidoreductase (245 aa).

This sequence belongs to the HY2 family.

It carries out the reaction (3Z)-phycoerythrobilin + oxidized 2[4Fe-4S]-[ferredoxin] = 15,16-dihydrobiliverdin + reduced 2[4Fe-4S]-[ferredoxin] + 2 H(+). Its function is as follows. Catalyzes the two-electron reduction of the C2 and C3(1) diene system of 15,16-dihydrobiliverdin. This chain is Phycoerythrobilin:ferredoxin oxidoreductase (pebB), found in Gloeobacter violaceus (strain ATCC 29082 / PCC 7421).